Here is a 297-residue protein sequence, read N- to C-terminus: MADKLVKATAKNGDVRIIAAITTDMVNEGVKTHKCAPTAAAALGRMLTAGVLMGAQLKAESDSITLKINGGGIAKSVTVTSYSDAHVKGYIANPNADLPVNSQGKLDVGGIIGKNGNLLVIRDMGLKEPYVGQVPIYTGEIGDDIAYYYVNSEQTPSAVGLGVLVDKDLSIKASGGFIIQMMPGADDLVADLITYRLQEIPSITDLIAKGMSVEDILEFIFEDMDLKILDEGIVPEYRCDCSRDRVEKALISIGMKDLKEIYDDGKQEEVVCNFCNKKYVFTNDEVGSLIKRLENNK.

Cystine bridges form between Cys-239/Cys-241 and Cys-272/Cys-275.

The protein belongs to the HSP33 family. In terms of processing, under oxidizing conditions two disulfide bonds are formed involving the reactive cysteines. Under reducing conditions zinc is bound to the reactive cysteines and the protein is inactive.

It localises to the cytoplasm. Functionally, redox regulated molecular chaperone. Protects both thermally unfolding and oxidatively damaged proteins from irreversible aggregation. Plays an important role in the bacterial defense system toward oxidative stress. The sequence is that of 33 kDa chaperonin from Clostridium acetobutylicum (strain ATCC 824 / DSM 792 / JCM 1419 / IAM 19013 / LMG 5710 / NBRC 13948 / NRRL B-527 / VKM B-1787 / 2291 / W).